Here is a 96-residue protein sequence, read N- to C-terminus: Co-chaperonin GroES (96 aa).

It belongs to the GroES chaperonin family. In terms of assembly, heptamer of 7 subunits arranged in a ring. Interacts with the chaperonin GroEL.

Its subcellular location is the cytoplasm. Together with the chaperonin GroEL, plays an essential role in assisting protein folding. The GroEL-GroES system forms a nano-cage that allows encapsulation of the non-native substrate proteins and provides a physical environment optimized to promote and accelerate protein folding. GroES binds to the apical surface of the GroEL ring, thereby capping the opening of the GroEL channel. The chain is Co-chaperonin GroES from Shewanella pealeana (strain ATCC 700345 / ANG-SQ1).